Consider the following 216-residue polypeptide: Elongation factor Ts (216 aa).

The segment at 81-84 is involved in Mg(2+) ion dislocation from EF-Tu; it reads TDFV.

The protein belongs to the EF-Ts family.

It is found in the cytoplasm. Associates with the EF-Tu.GDP complex and induces the exchange of GDP to GTP. It remains bound to the aminoacyl-tRNA.EF-Tu.GTP complex up to the GTP hydrolysis stage on the ribosome. The sequence is that of Elongation factor Ts from Geotalea uraniireducens (strain Rf4) (Geobacter uraniireducens).